Reading from the N-terminus, the 101-residue chain is Large ribosomal subunit protein uL23 (101 aa).

The protein belongs to the universal ribosomal protein uL23 family. As to quaternary structure, part of the 50S ribosomal subunit. Contacts protein L29, and trigger factor when it is bound to the ribosome.

Functionally, one of the early assembly proteins it binds 23S rRNA. One of the proteins that surrounds the polypeptide exit tunnel on the outside of the ribosome. Forms the main docking site for trigger factor binding to the ribosome. The polypeptide is Large ribosomal subunit protein uL23 (Rhodococcus jostii (strain RHA1)).